The following is a 454-amino-acid chain: uncharacterized protein (454 aa).

The N-terminal stretch at 1 to 18 (MRRFTLFVFFLSISIAYA) is a signal peptide.

This is an uncharacterized protein from Caenorhabditis elegans.